Reading from the N-terminus, the 188-residue chain is Apolipoprotein M (188 aa).

Residues 1 to 22 constitute a signal peptide (not cleaved); the sequence is MFHQIWAALLYLYGILLNSIYQ. 3 disulfide bridges follow: C23/C167, C95/C183, and C128/C157. E136 and R143 together coordinate tetradecanoate.

It belongs to the calycin superfamily. Lipocalin family. Highly divergent. Interacts with LRP2; LRP2 mediates APOM renal uptake and subsequent lysosomal degradation.

It localises to the secreted. Functionally, probably involved in lipid transport. Can bind sphingosine-1-phosphate, myristic acid, palmitic acid and stearic acid, retinol, all-trans-retinoic acid and 9-cis-retinoic acid. The polypeptide is Apolipoprotein M (APOM) (Sus scrofa (Pig)).